The following is a 600-amino-acid chain: Elongation factor 4 (600 aa).

The region spanning 3-185 (KYIRNFSIIA…CLIHDIPHPQ (183 aa)) is the tr-type G domain. GTP is bound by residues 15–20 (DHGKST) and 132–135 (NKID).

Belongs to the TRAFAC class translation factor GTPase superfamily. Classic translation factor GTPase family. LepA subfamily.

The protein resides in the cell inner membrane. It catalyses the reaction GTP + H2O = GDP + phosphate + H(+). Its function is as follows. Required for accurate and efficient protein synthesis under certain stress conditions. May act as a fidelity factor of the translation reaction, by catalyzing a one-codon backward translocation of tRNAs on improperly translocated ribosomes. Back-translocation proceeds from a post-translocation (POST) complex to a pre-translocation (PRE) complex, thus giving elongation factor G a second chance to translocate the tRNAs correctly. Binds to ribosomes in a GTP-dependent manner. This chain is Elongation factor 4, found in Blochmanniella pennsylvanica (strain BPEN).